The chain runs to 335 residues: Cathepsin B-like cysteine proteinase 4 (335 aa).

The signal sequence occupies residues 1–15 (MKYLILAALVAVTAG). A propeptide spanning residues 16–80 (LVIPLVPKTQ…VVKHDINEDT (65 aa)) is cleaved from the precursor. 6 disulfides stabilise this stretch: Cys-94–Cys-123, Cys-106–Cys-150, Cys-142–Cys-209, Cys-143–Cys-146, Cys-179–Cys-213, and Cys-187–Cys-199. Residue Cys-109 is part of the active site. An N-linked (GlcNAc...) asparagine glycan is attached at Asn-193. Residues His-281 and Asn-301 contribute to the active site.

The protein belongs to the peptidase C1 family.

The protein localises to the secreted. Thiol protease which shows activity against the fluorogenic substrate z-Arg-Arg-AMC. This Caenorhabditis elegans protein is Cathepsin B-like cysteine proteinase 4 (cpr-4).